Here is a 453-residue protein sequence, read N- to C-terminus: Malate dehydrogenase [NADP], chloroplastic (453 aa).

A chloroplast-targeting transit peptide spans 1 to 68 (MAVVKLSPWA…RLSSPASIRC (68 aa)). The cysteines at positions 88 and 93 are disulfide-linked. 117 to 123 (GAAGMIS) contributes to the NADP(+) binding site. The substrate site is built by Arg-198 and Arg-204. NADP(+) is bound by residues Asn-211, Gln-218, and 235 to 237 (VGN). Positions 237 and 268 each coordinate substrate. The active-site Proton acceptor is His-293. Cys-429 and Cys-441 form a disulfide bridge.

The protein belongs to the LDH/MDH superfamily. MDH type 2 family. As to quaternary structure, homodimer.

The protein localises to the plastid. The protein resides in the chloroplast. It catalyses the reaction (S)-malate + NADP(+) = oxaloacetate + NADPH + H(+). Its activity is regulated as follows. Chloroplast NADP-MDH is activated upon illumination. In order to be enzymatically active, disulfide bridges on the protein must be reduced by thioredoxin which receives electrons from ferredoxin and the electron transport system of photosynthesis. The chloroplastic, NADP-dependent form is essential for the photosynthesis C4 cycle, which allows plants to circumvent the problem of photorespiration. In C4 plants, NADP-MDH activity acts to convert oxaloacetate to malate in chloroplasts of mesophyll cells for transport to the bundle sheath cells. In Flaveria bidentis (Coastal plain yellowtops), this protein is Malate dehydrogenase [NADP], chloroplastic.